A 119-amino-acid chain; its full sequence is Large ribosomal subunit protein bL20 (119 aa).

Belongs to the bacterial ribosomal protein bL20 family.

Its function is as follows. Binds directly to 23S ribosomal RNA and is necessary for the in vitro assembly process of the 50S ribosomal subunit. It is not involved in the protein synthesizing functions of that subunit. This Stenotrophomonas maltophilia (strain K279a) protein is Large ribosomal subunit protein bL20.